A 318-amino-acid chain; its full sequence is Olfactory receptor 5G25 (318 aa).

The Extracellular portion of the chain corresponds to 1–25 (MMHRNQTVVTEFFFTGLTSSFHLQI). Residue N5 is glycosylated (N-linked (GlcNAc...) asparagine). A helical membrane pass occupies residues 26–46 (VLFLTFLCVYLATLLGNLGMI). Over 47 to 54 (ILIHQDTR) the chain is Cytoplasmic. Residues 55 to 75 (LHIPMYFFLSHLSFVDACSSS) traverse the membrane as a helical segment. The Extracellular portion of the chain corresponds to 76–99 (VISPKMLSDIFVDKKVISFLGCAI). A disulfide bridge links C97 with C189. A helical transmembrane segment spans residues 100-120 (QFCLFSQFVVTECFLLASMAY). The Cytoplasmic segment spans residues 121 to 133 (DRYVAICKPLLYT). The helical transmembrane segment at 134 to 154 (LIMSQRVCVQLVIGPYSIGLI) threads the bilayer. Topologically, residues 155–196 (STVVHTTSAFILPYCGPNLINHFFCDLLPVLSLACADTQMNK) are extracellular. Residues 197-217 (HLLFIMAGILGVFSGIIILVS) traverse the membrane as a helical segment. Residues 218–237 (YVYIAITILKINSADGRRKA) lie on the Cytoplasmic side of the membrane. A helical transmembrane segment spans residues 238–258 (FSTCSSHLTAVSILYGTLFFI). Topologically, residues 259–271 (YVRPSSSFSLDIN) are extracellular. A helical transmembrane segment spans residues 272–292 (KVVSLFYTAVIPMLNPFIYSL). The Cytoplasmic segment spans residues 293–318 (RNKEVKDALIRTFEKKFCYSLQDKIL).

This sequence belongs to the G-protein coupled receptor 1 family.

It is found in the cell membrane. Functionally, potential odorant receptor. The chain is Olfactory receptor 5G25 from Mus musculus (Mouse).